The chain runs to 214 residues: RNA pyrophosphohydrolase (214 aa).

The Nudix hydrolase domain maps to 6–149 (GFRPNVGIIL…KRDVYQLALT (144 aa)). The Nudix box motif lies at 38-59 (GGIKYGETPMQAMYRELHEETG).

Belongs to the Nudix hydrolase family. RppH subfamily. A divalent metal cation is required as a cofactor.

Accelerates the degradation of transcripts by removing pyrophosphate from the 5'-end of triphosphorylated RNA, leading to a more labile monophosphorylated state that can stimulate subsequent ribonuclease cleavage. The chain is RNA pyrophosphohydrolase from Burkholderia cenocepacia (strain ATCC BAA-245 / DSM 16553 / LMG 16656 / NCTC 13227 / J2315 / CF5610) (Burkholderia cepacia (strain J2315)).